Consider the following 260-residue polypeptide: UPF0246 protein APL_0602 (260 aa).

This sequence belongs to the UPF0246 family.

This is UPF0246 protein APL_0602 from Actinobacillus pleuropneumoniae serotype 5b (strain L20).